A 396-amino-acid polypeptide reads, in one-letter code: Tryptophan synthase beta chain (396 aa).

Lys86 bears the N6-(pyridoxal phosphate)lysine mark.

Belongs to the TrpB family. As to quaternary structure, tetramer of two alpha and two beta chains. It depends on pyridoxal 5'-phosphate as a cofactor.

It carries out the reaction (1S,2R)-1-C-(indol-3-yl)glycerol 3-phosphate + L-serine = D-glyceraldehyde 3-phosphate + L-tryptophan + H2O. It participates in amino-acid biosynthesis; L-tryptophan biosynthesis; L-tryptophan from chorismate: step 5/5. The beta subunit is responsible for the synthesis of L-tryptophan from indole and L-serine. The polypeptide is Tryptophan synthase beta chain (Vibrio cholerae serotype O1 (strain ATCC 39315 / El Tor Inaba N16961)).